The primary structure comprises 250 residues: 1-(5-phosphoribosyl)-5-[(5-phosphoribosylamino)methylideneamino] imidazole-4-carboxamide isomerase (250 aa).

D12 (proton acceptor) is an active-site residue. The Proton donor role is filled by D134.

The protein belongs to the HisA/HisF family.

The protein resides in the cytoplasm. It catalyses the reaction 1-(5-phospho-beta-D-ribosyl)-5-[(5-phospho-beta-D-ribosylamino)methylideneamino]imidazole-4-carboxamide = 5-[(5-phospho-1-deoxy-D-ribulos-1-ylimino)methylamino]-1-(5-phospho-beta-D-ribosyl)imidazole-4-carboxamide. Its pathway is amino-acid biosynthesis; L-histidine biosynthesis; L-histidine from 5-phospho-alpha-D-ribose 1-diphosphate: step 4/9. In Actinobacillus pleuropneumoniae serotype 5b (strain L20), this protein is 1-(5-phosphoribosyl)-5-[(5-phosphoribosylamino)methylideneamino] imidazole-4-carboxamide isomerase.